Consider the following 600-residue polypeptide: Glutamine--fructose-6-phosphate aminotransferase [isomerizing] (600 aa).

C2 acts as the Nucleophile; for GATase activity in catalysis. The 216-residue stretch at 2 to 217 folds into the Glutamine amidotransferase type-2 domain; that stretch reads CGIVGYIGNE…DEELVIVRRD (216 aa). SIS domains lie at 283–422 and 452–590; these read IRAA…AAGK and IARD…VDKP. Residue K595 is the For Fru-6P isomerization activity of the active site.

Homodimer.

The protein localises to the cytoplasm. It carries out the reaction D-fructose 6-phosphate + L-glutamine = D-glucosamine 6-phosphate + L-glutamate. In terms of biological role, catalyzes the first step in hexosamine metabolism, converting fructose-6P into glucosamine-6P using glutamine as a nitrogen source. This is Glutamine--fructose-6-phosphate aminotransferase [isomerizing] from Shouchella clausii (strain KSM-K16) (Alkalihalobacillus clausii).